A 450-amino-acid polypeptide reads, in one-letter code: UDP-N-acetylmuramoylalanine--D-glutamate ligase (450 aa).

119-125 (GSNGKTT) is an ATP binding site.

The protein belongs to the MurCDEF family.

It localises to the cytoplasm. It carries out the reaction UDP-N-acetyl-alpha-D-muramoyl-L-alanine + D-glutamate + ATP = UDP-N-acetyl-alpha-D-muramoyl-L-alanyl-D-glutamate + ADP + phosphate + H(+). It functions in the pathway cell wall biogenesis; peptidoglycan biosynthesis. Its function is as follows. Cell wall formation. Catalyzes the addition of glutamate to the nucleotide precursor UDP-N-acetylmuramoyl-L-alanine (UMA). The chain is UDP-N-acetylmuramoylalanine--D-glutamate ligase from Bacillus cereus (strain AH187).